The following is a 380-amino-acid chain: Cytochrome b (380 aa).

Helical transmembrane passes span 34–54, 78–99, 114–134, and 179–199; these read FGSL…FLAM, WLIR…YLHI, WNIG…GYVL, and FFTF…IHLL. Heme b-binding residues include His-84 and His-98. Heme b contacts are provided by His-183 and His-197. Position 202 (His-202) interacts with a ubiquinone. Transmembrane regions (helical) follow at residues 227–247, 289–309, 321–341, and 348–368; these read YKDL…ALFT, LGGV…PILH, ITQI…WIGG, and FITI…ILFP.

It belongs to the cytochrome b family. In terms of assembly, the cytochrome bc1 complex contains 3 respiratory subunits (MT-CYB, CYC1 and UQCRFS1), 2 core proteins (UQCRC1 and UQCRC2) and probably 6 low-molecular weight proteins. Heme b serves as cofactor.

The protein localises to the mitochondrion inner membrane. Component of the ubiquinol-cytochrome c reductase complex (complex III or cytochrome b-c1 complex) that is part of the mitochondrial respiratory chain. The b-c1 complex mediates electron transfer from ubiquinol to cytochrome c. Contributes to the generation of a proton gradient across the mitochondrial membrane that is then used for ATP synthesis. This Hemitrygon laosensis (Mekong freshwater stingray) protein is Cytochrome b (mt-cyb).